Consider the following 153-residue polypeptide: Endoribonuclease YbeY (153 aa).

3 residues coordinate Zn(2+): histidine 118, histidine 122, and histidine 128.

Belongs to the endoribonuclease YbeY family. Zn(2+) is required as a cofactor.

It is found in the cytoplasm. In terms of biological role, single strand-specific metallo-endoribonuclease involved in late-stage 70S ribosome quality control and in maturation of the 3' terminus of the 16S rRNA. This chain is Endoribonuclease YbeY, found in Staphylococcus saprophyticus subsp. saprophyticus (strain ATCC 15305 / DSM 20229 / NCIMB 8711 / NCTC 7292 / S-41).